The primary structure comprises 20 residues: Apidaecin 3+ (20 aa).

Residues glycine 1 to leucine 20 are disordered.

The protein belongs to the apidaecin family.

It is found in the secreted. Functionally, antimicrobial peptide active against many Gram-negative enterobacterial and plant-associated bacterial species. Not active against other bacterial species like H.pylori, P.mirabilis, B.pertussis or N.gonorrhoeae. Its function is as follows. Among others, also active against S.typhi. In terms of biological role, not active against S.typhi. This is Apidaecin 3+ from Pimpla disparis (Parasitic wasp).